We begin with the raw amino-acid sequence, 336 residues long: Holliday junction branch migration complex subunit RuvB (336 aa).

Residues 1–11 (MDDDKLLSGDK) are compositionally biased toward basic and acidic residues. The tract at residues 1-21 (MDDDKLLSGDKADDEEASLEK) is disordered. A large ATPase domain (RuvB-L) region spans residues 1-184 (MDDDKLLSGD…FGIVEHMAYY (184 aa)). ATP contacts are provided by residues L23, R24, G65, K68, T69, T70, 131–133 (EDF), R174, Y184, and R221. Mg(2+) is bound at residue T69. Residues 185 to 255 (EVADLEDIVK…IVARSLTYLR (71 aa)) are small ATPAse domain (RuvB-S). Residues 258 to 336 (DAGLDETDNK…HLGFPYPENK (79 aa)) form a head domain (RuvB-H) region. DNA contacts are provided by R313 and R318.

Belongs to the RuvB family. In terms of assembly, homohexamer. Forms an RuvA(8)-RuvB(12)-Holliday junction (HJ) complex. HJ DNA is sandwiched between 2 RuvA tetramers; dsDNA enters through RuvA and exits via RuvB. An RuvB hexamer assembles on each DNA strand where it exits the tetramer. Each RuvB hexamer is contacted by two RuvA subunits (via domain III) on 2 adjacent RuvB subunits; this complex drives branch migration. In the full resolvosome a probable DNA-RuvA(4)-RuvB(12)-RuvC(2) complex forms which resolves the HJ.

It is found in the cytoplasm. The enzyme catalyses ATP + H2O = ADP + phosphate + H(+). In terms of biological role, the RuvA-RuvB-RuvC complex processes Holliday junction (HJ) DNA during genetic recombination and DNA repair, while the RuvA-RuvB complex plays an important role in the rescue of blocked DNA replication forks via replication fork reversal (RFR). RuvA specifically binds to HJ cruciform DNA, conferring on it an open structure. The RuvB hexamer acts as an ATP-dependent pump, pulling dsDNA into and through the RuvAB complex. RuvB forms 2 homohexamers on either side of HJ DNA bound by 1 or 2 RuvA tetramers; 4 subunits per hexamer contact DNA at a time. Coordinated motions by a converter formed by DNA-disengaged RuvB subunits stimulates ATP hydrolysis and nucleotide exchange. Immobilization of the converter enables RuvB to convert the ATP-contained energy into a lever motion, pulling 2 nucleotides of DNA out of the RuvA tetramer per ATP hydrolyzed, thus driving DNA branch migration. The RuvB motors rotate together with the DNA substrate, which together with the progressing nucleotide cycle form the mechanistic basis for DNA recombination by continuous HJ branch migration. Branch migration allows RuvC to scan DNA until it finds its consensus sequence, where it cleaves and resolves cruciform DNA. This Lactiplantibacillus plantarum (strain ATCC BAA-793 / NCIMB 8826 / WCFS1) (Lactobacillus plantarum) protein is Holliday junction branch migration complex subunit RuvB.